A 629-amino-acid polypeptide reads, in one-letter code: tRNA uridine 5-carboxymethylaminomethyl modification enzyme MnmG (629 aa).

Glycine 13 to glycine 18 lines the FAD pocket. Glycine 273 to phenylalanine 287 is a binding site for NAD(+).

It belongs to the MnmG family. Homodimer. Heterotetramer of two MnmE and two MnmG subunits. FAD serves as cofactor.

The protein localises to the cytoplasm. Functionally, NAD-binding protein involved in the addition of a carboxymethylaminomethyl (cmnm) group at the wobble position (U34) of certain tRNAs, forming tRNA-cmnm(5)s(2)U34. In Colwellia psychrerythraea (strain 34H / ATCC BAA-681) (Vibrio psychroerythus), this protein is tRNA uridine 5-carboxymethylaminomethyl modification enzyme MnmG.